A 318-amino-acid chain; its full sequence is Ribose-phosphate pyrophosphokinase (318 aa).

ATP contacts are provided by residues 46-48 (DGE) and 105-106 (RQ). Mg(2+)-binding residues include histidine 139 and aspartate 178. Lysine 201 is a catalytic residue. D-ribose 5-phosphate contacts are provided by residues arginine 203, aspartate 227, and 231–235 (DTAGT).

Belongs to the ribose-phosphate pyrophosphokinase family. Class I subfamily. As to quaternary structure, homohexamer. It depends on Mg(2+) as a cofactor.

The protein localises to the cytoplasm. It catalyses the reaction D-ribose 5-phosphate + ATP = 5-phospho-alpha-D-ribose 1-diphosphate + AMP + H(+). Its pathway is metabolic intermediate biosynthesis; 5-phospho-alpha-D-ribose 1-diphosphate biosynthesis; 5-phospho-alpha-D-ribose 1-diphosphate from D-ribose 5-phosphate (route I): step 1/1. Involved in the biosynthesis of the central metabolite phospho-alpha-D-ribosyl-1-pyrophosphate (PRPP) via the transfer of pyrophosphoryl group from ATP to 1-hydroxyl of ribose-5-phosphate (Rib-5-P). This is Ribose-phosphate pyrophosphokinase from Helicobacter pylori (strain J99 / ATCC 700824) (Campylobacter pylori J99).